A 183-amino-acid polypeptide reads, in one-letter code: Capsid protein (183 aa).

The segment at 136-183 is disordered; the sequence is NAPILSTLPETTVVRRRGRSPRRRTPSPRRRRSQSPRRRRSQSPASQC. A compositionally biased stretch (basic residues) spans 149 to 176; that stretch reads VRRRGRSPRRRTPSPRRRRSQSPRRRRS. Residues Ser-155, Ser-162, and Ser-170 each carry the phosphoserine; by host modification. The stretch at 155–161 is one 1; half-length repeat; it reads SPRRRTP. Residues 155 to 177 form a 3 X 8 AA repeats of S-P-R-R-R-[PR]-S-Q region; the sequence is SPRRRTPSPRRRRSQSPRRRRSQ. Positions 158-175 match the Bipartite nuclear localization signal motif; that stretch reads RRTPSPRRRRSQSPRRRR. Tandem repeats lie at residues 162 to 169 and 170 to 177. The segment at 177–183 is RNA binding; it reads QSPASQC.

The protein belongs to the orthohepadnavirus core antigen family. As to quaternary structure, homodimerizes, then multimerizes. Interacts with cytosol exposed regions of viral L glycoprotein present in the reticulum-to-Golgi compartment. Interacts with human FLNB. Phosphorylated form interacts with host importin alpha; this interaction depends on the exposure of the NLS, which itself depends upon genome maturation and/or phosphorylation of the capsid protein. Interacts with host NUP153. Phosphorylated by host SRPK1, SRPK2, and maybe protein kinase C or GAPDH. Phosphorylation is critical for pregenomic RNA packaging. Protein kinase C phosphorylation is stimulated by HBx protein and may play a role in transport of the viral genome to the nucleus at the late step during the viral replication cycle.

The protein localises to the virion. Its subcellular location is the host cytoplasm. Functionally, self assembles to form an icosahedral capsid. Most capsids appear to be large particles with an icosahedral symmetry of T=4 and consist of 240 copies of capsid protein, though a fraction forms smaller T=3 particles consisting of 180 capsid proteins. Entering capsids are transported along microtubules to the nucleus. Phosphorylation of the capsid is thought to induce exposure of nuclear localization signal in the C-terminal portion of the capsid protein that allows binding to the nuclear pore complex via the importin (karyopherin-) alpha and beta. Capsids are imported in intact form through the nuclear pore into the nuclear basket, where it probably binds NUP153. Only capsids that contain the mature viral genome can release the viral DNA and capsid protein into the nucleoplasm. Immature capsids get stuck in the basket. Capsids encapsulate the pre-genomic RNA and the P protein. Pre-genomic RNA is reverse-transcribed into DNA while the capsid is still in the cytoplasm. The capsid can then either be directed to the nucleus, providing more genomes for transcription, or bud through the endoplasmic reticulum to provide new virions. This is Capsid protein from Hepatitis B virus genotype F2 (isolate Brazil/w4B) (HBV-F).